The following is a 200-amino-acid chain: Glycerol-3-phosphate acyltransferase (200 aa).

Transmembrane regions (helical) follow at residues 2–22, 51–71, 84–104, 114–134, and 159–179; these read FNIS…AVIV, KAAA…VLLA, AIAA…FFGF, LGVL…IWLV, and FFMP…LVLF.

It belongs to the PlsY family. In terms of assembly, probably interacts with PlsX.

Its subcellular location is the cell inner membrane. The enzyme catalyses an acyl phosphate + sn-glycerol 3-phosphate = a 1-acyl-sn-glycero-3-phosphate + phosphate. It participates in lipid metabolism; phospholipid metabolism. Its function is as follows. Catalyzes the transfer of an acyl group from acyl-phosphate (acyl-PO(4)) to glycerol-3-phosphate (G3P) to form lysophosphatidic acid (LPA). This enzyme utilizes acyl-phosphate as fatty acyl donor, but not acyl-CoA or acyl-ACP. The protein is Glycerol-3-phosphate acyltransferase of Neisseria meningitidis serogroup C (strain 053442).